The following is a 361-amino-acid chain: S-adenosylmethionine:tRNA ribosyltransferase-isomerase (361 aa).

The protein belongs to the QueA family. Monomer.

Its subcellular location is the cytoplasm. It catalyses the reaction 7-aminomethyl-7-carbaguanosine(34) in tRNA + S-adenosyl-L-methionine = epoxyqueuosine(34) in tRNA + adenine + L-methionine + 2 H(+). The protein operates within tRNA modification; tRNA-queuosine biosynthesis. Its function is as follows. Transfers and isomerizes the ribose moiety from AdoMet to the 7-aminomethyl group of 7-deazaguanine (preQ1-tRNA) to give epoxyqueuosine (oQ-tRNA). The sequence is that of S-adenosylmethionine:tRNA ribosyltransferase-isomerase from Afipia carboxidovorans (strain ATCC 49405 / DSM 1227 / KCTC 32145 / OM5) (Oligotropha carboxidovorans).